The sequence spans 60 residues: MDPKLLELLVCPVTKGPLTYDRERQELISRSARLAYPVRDGIPVLLENEARPLSDEELEQ.

Belongs to the UPF0434 family.

The polypeptide is UPF0434 protein Dtpsy_1553 (Acidovorax ebreus (strain TPSY) (Diaphorobacter sp. (strain TPSY))).